The primary structure comprises 235 residues: Small ribosomal subunit protein mS23 (235 aa).

Residues P51 to N71 are disordered.

The protein belongs to the mitochondrion-specific ribosomal protein mS23 family. In terms of assembly, component of the mitochondrial small ribosomal subunit.

It is found in the mitochondrion. In Chaetomium globosum (strain ATCC 6205 / CBS 148.51 / DSM 1962 / NBRC 6347 / NRRL 1970) (Soil fungus), this protein is Small ribosomal subunit protein mS23 (RSM25).